A 949-amino-acid chain; its full sequence is MESFAGSCEIVEEKDAVRLAKHSSRYCMSPLGSSKDMEQRPALKSGYQGSMEYDIDQLFQSITIKPSPRRVMGSSFHHLETSASAGTSRSTSPSNKGAMKKPFPMGTPRSPRVGPSDSISLKQALRDLCISKASEMASQKRLSKSAAASPRVSEADRIKTLYRQVLNESAGKPGLPVDKGKSLVEISLTPVVDIPSSSQSVPQRYDVLETEPSNFISEPSQAEILLHVLGNGSGIKTVGYGMLETVSLCKSNKSGSCLSSGSGDYEIEIDENHTSPPHMVIEDQLVEIDKHVTSLPSCSGSKVDTEELDKSIVSSARVKSEPTALSSGLKGKLDNFPGSGTEKSKLVSKVTRNIPRPKPRPKKKILLKKKLKIVVNSATKMVEEVDTSLEPSASQLLCQKCHCAVKSTSTENHPPSNTSHTTDKNVSIEADQESLASPRLIRIVKCNKEASKGSSDSCEVSDSGEAVIVMKQEVSPSNYSGKGDADEQIRANPTSSEKFDFSLSSKNSLGDYSSSTSMSEESNLSRFSCGNKPHMSMDVRWEAVKHVKLQYGSLGLRHFNLLKKLGCGDIGTVYLAELVGTNCLFAIKVMDNEFLARRKKTPRAQAERAILKMLDHPFLPTLYAQFTSDNLSCLVMEYCPGGDLHVLRQKQLSRCFSEPATRFYVAEILLALEYLHMLGVIYRDLKPENILVREDGHIMLTDFDLSLRCAVNPTLLRSTSPPEKDPARMSGPYSTSNCIQPLCIEPSCRVPCFSPRLLSTQARNQKPRKPKRPDLLTQQFRSLPQLVAEPTEARSNSFVGTHEYLAPEIIKGEGHGAAVDWWTFGVLLYELLYGKTPFKGYDNEETLSNVVYQNLKFPDSPLVSFQAKELIRRLLVKDPESRLGSEKGAAEIKRHPFFEGLNWALIRCAIPPELPDIYDNGATEATSPEGNNRYLECKAIGDHLEFELF.

Disordered stretches follow at residues 79–116, 323–344, 407–426, and 495–525; these read LETS…VGPS, TALS…TEKS, STST…DKNV, and SSEK…SNLS. Over residues 81–94 the composition is skewed to low complexity; that stretch reads TSASAGTSRSTSPS. 2 stretches are compositionally biased toward polar residues: residues 407-420 and 495-512; these read STST…NTSH and SSEK…LGDY. A compositionally biased stretch (low complexity) spans 513–525; sequence SSSTSMSEESNLS. A Protein kinase domain is found at 559–898; it reads FNLLKKLGCG…AAEIKRHPFF (340 aa). Residues 565 to 573 and Lys-588 each bind ATP; that span reads LGCGDIGTV. Catalysis depends on Asp-684, which acts as the Proton acceptor.

Belongs to the protein kinase superfamily. Ser/Thr protein kinase family. Interacts with KCBP, PERK8, PERK9, PERK10 and PERK13.

It catalyses the reaction L-seryl-[protein] + ATP = O-phospho-L-seryl-[protein] + ADP + H(+). It carries out the reaction L-threonyl-[protein] + ATP = O-phospho-L-threonyl-[protein] + ADP + H(+). In terms of biological role, serine/threonine-protein kinase that could be involved in the negative regulation of root growth. The polypeptide is Serine/threonine-protein kinase KIPK2 (Arabidopsis thaliana (Mouse-ear cress)).